The following is a 260-amino-acid chain: MSQRTRLSVNVNKIAVLRNSRGHGAPDVIRAASACIDAGAHGITVHPRPDARHIRHDDVIGLSTLTRARGVEFNIEGNPFAEPRAGYCGLLALCRETRPHQVTLVPDGDQQITSDHGFDFAREGPGLRPLIDEIKQWGCRVSLFVDVNVTGLADAAIWGVDRIELYTGPYAEMHHAGCSDAVLREFATTARLAQDVGLGVNAGHDLSQTNLGVFLGAVPDVLEVSIGHALISEALYEGLIPTVRRYLDILDSVNPAVSMR.

Positions 10 and 21 each coordinate 3-amino-2-oxopropyl phosphate. Catalysis depends on His46, which acts as the Proton acceptor. Positions 48 and 53 each coordinate 1-deoxy-D-xylulose 5-phosphate. Glu76 functions as the Proton acceptor in the catalytic mechanism. Thr113 contributes to the 1-deoxy-D-xylulose 5-phosphate binding site. Residue His204 is the Proton donor of the active site. Residues Asp205 and 227–228 (GH) contribute to the 3-amino-2-oxopropyl phosphate site.

Belongs to the PNP synthase family. As to quaternary structure, homooctamer; tetramer of dimers.

It localises to the cytoplasm. The enzyme catalyses 3-amino-2-oxopropyl phosphate + 1-deoxy-D-xylulose 5-phosphate = pyridoxine 5'-phosphate + phosphate + 2 H2O + H(+). The protein operates within cofactor biosynthesis; pyridoxine 5'-phosphate biosynthesis; pyridoxine 5'-phosphate from D-erythrose 4-phosphate: step 5/5. In terms of biological role, catalyzes the complicated ring closure reaction between the two acyclic compounds 1-deoxy-D-xylulose-5-phosphate (DXP) and 3-amino-2-oxopropyl phosphate (1-amino-acetone-3-phosphate or AAP) to form pyridoxine 5'-phosphate (PNP) and inorganic phosphate. This chain is Pyridoxine 5'-phosphate synthase, found in Xylella fastidiosa (strain M12).